The chain runs to 216 residues: Probable GTP-binding protein EngB (216 aa).

The EngB-type G domain maps to 24 to 205 (QTPELAFVGR…WARIASAATD (182 aa)). GTP-binding positions include 32–39 (GRSNVGKS), 59–63 (GRTRA), 86–89 (DLPG), 153–156 (TKMD), and 184–186 (FSA). Positions 39 and 61 each coordinate Mg(2+).

This sequence belongs to the TRAFAC class TrmE-Era-EngA-EngB-Septin-like GTPase superfamily. EngB GTPase family. Mg(2+) is required as a cofactor.

Functionally, necessary for normal cell division and for the maintenance of normal septation. The protein is Probable GTP-binding protein EngB of Anaeromyxobacter sp. (strain Fw109-5).